The sequence spans 183 residues: Ribosome-recycling factor (183 aa).

The protein belongs to the RRF family.

It is found in the cytoplasm. Functionally, responsible for the release of ribosomes from messenger RNA at the termination of protein biosynthesis. May increase the efficiency of translation by recycling ribosomes from one round of translation to another. The chain is Ribosome-recycling factor from Bifidobacterium longum (strain DJO10A).